A 516-amino-acid chain; its full sequence is Cytochrome P450 monooxygenase dtxS2 (516 aa).

The helical transmembrane segment at 23–43 (ILASVIVLLGLKVATILYTAF) threads the bilayer. An N-linked (GlcNAc...) asparagine glycan is attached at Asn187. Residues 229 to 249 (VLVPLLVFPYISWLLVWWLLS) form a helical membrane-spanning segment. Residue Cys458 participates in heme binding.

Belongs to the cytochrome P450 family. Requires heme as cofactor.

It localises to the membrane. It functions in the pathway secondary metabolite biosynthesis. Its function is as follows. Cytochrome P450 monooxygenase; part of the gene cluster that mediates the biosynthesis of destruxins, insecticidal cyclic hexadepsipeptides which induce flaccid paralysis and visceral muscle contraction in insects through targeting the calcium channels and vacuolar-type ATPases. The aldo-keto reductase dtxS3 converts alpha-ketoisocaproic acid from deaminated leucine into alpha-hydroxyisocaproic acid (HIC), which is the first substrate for destruxin assembly by dtxS1. L-aspartate decarboxylase dtxS4 converts aspartic acid into beta-alanine, the last substrate for the destruxin assembly line performed by dtxS1. The nonribosomal peptide synthetase dtxS1 synthesizes destruxins B and B2, whereas the cytochrome P450 monooxygenase dtxS2 is required to convert destruxin B into other destruxin derivatives, including destructins C, D, A and E. Destruxin E-diol (ED) is further produced in a non-enzymatic manner from destruxin E. Destruxins play an important role in virulence and escape from insect host immune defenses. The chain is Cytochrome P450 monooxygenase dtxS2 from Metarhizium robertsii (strain ARSEF 23 / ATCC MYA-3075) (Metarhizium anisopliae (strain ARSEF 23)).